Consider the following 196-residue polypeptide: Cell division protein SepF (196 aa).

The interval 15–80 is disordered; sequence VEDDEEFNEP…PKRSASTFSK (66 aa). The segment covering 57 to 72 has biased composition (low complexity); the sequence is PAQTTPKPQTQTAAPK.

The protein belongs to the SepF family. In terms of assembly, homodimer. Interacts with FtsZ.

The protein localises to the cytoplasm. Functionally, cell division protein that is part of the divisome complex and is recruited early to the Z-ring. Probably stimulates Z-ring formation, perhaps through the cross-linking of FtsZ protofilaments. Its function overlaps with FtsA. This is Cell division protein SepF from Lactococcus lactis subsp. cremoris (strain MG1363).